Here is a 147-residue protein sequence, read N- to C-terminus: D-aminoacyl-tRNA deacylase (147 aa).

Positions 136–137 match the Gly-cisPro motif, important for rejection of L-amino acids motif; that stretch reads GP.

Belongs to the DTD family. In terms of assembly, homodimer.

The protein resides in the cytoplasm. It carries out the reaction glycyl-tRNA(Ala) + H2O = tRNA(Ala) + glycine + H(+). It catalyses the reaction a D-aminoacyl-tRNA + H2O = a tRNA + a D-alpha-amino acid + H(+). Functionally, an aminoacyl-tRNA editing enzyme that deacylates mischarged D-aminoacyl-tRNAs. Also deacylates mischarged glycyl-tRNA(Ala), protecting cells against glycine mischarging by AlaRS. Acts via tRNA-based rather than protein-based catalysis; rejects L-amino acids rather than detecting D-amino acids in the active site. By recycling D-aminoacyl-tRNA to D-amino acids and free tRNA molecules, this enzyme counteracts the toxicity associated with the formation of D-aminoacyl-tRNA entities in vivo and helps enforce protein L-homochirality. The protein is D-aminoacyl-tRNA deacylase of Streptococcus sanguinis (strain SK36).